We begin with the raw amino-acid sequence, 663 residues long: UvrABC system protein B (663 aa).

Positions Met-1–Phe-10 are enriched in basic and acidic residues. The disordered stretch occupies residues Met-1–Pro-23. Positions Asp-31–Arg-418 constitute a Helicase ATP-binding domain. ATP is bound at residue Gly-44–Thr-51. The Beta-hairpin motif lies at Tyr-97 to Val-120. Residues Gln-435–Ile-601 form the Helicase C-terminal domain. Positions Lys-627–Met-662 constitute a UVR domain.

The protein belongs to the UvrB family. Forms a heterotetramer with UvrA during the search for lesions. Interacts with UvrC in an incision complex.

The protein resides in the cytoplasm. Its function is as follows. The UvrABC repair system catalyzes the recognition and processing of DNA lesions. A damage recognition complex composed of 2 UvrA and 2 UvrB subunits scans DNA for abnormalities. Upon binding of the UvrA(2)B(2) complex to a putative damaged site, the DNA wraps around one UvrB monomer. DNA wrap is dependent on ATP binding by UvrB and probably causes local melting of the DNA helix, facilitating insertion of UvrB beta-hairpin between the DNA strands. Then UvrB probes one DNA strand for the presence of a lesion. If a lesion is found the UvrA subunits dissociate and the UvrB-DNA preincision complex is formed. This complex is subsequently bound by UvrC and the second UvrB is released. If no lesion is found, the DNA wraps around the other UvrB subunit that will check the other stand for damage. In Streptococcus pyogenes serotype M6 (strain ATCC BAA-946 / MGAS10394), this protein is UvrABC system protein B.